Here is a 299-residue protein sequence, read N- to C-terminus: Acetylglutamate kinase (299 aa).

Substrate-binding positions include 68–69 (GG), Arg-90, and Asn-194.

Belongs to the acetylglutamate kinase family. ArgB subfamily.

It localises to the cytoplasm. The enzyme catalyses N-acetyl-L-glutamate + ATP = N-acetyl-L-glutamyl 5-phosphate + ADP. It functions in the pathway amino-acid biosynthesis; L-arginine biosynthesis; N(2)-acetyl-L-ornithine from L-glutamate: step 2/4. Its function is as follows. Catalyzes the ATP-dependent phosphorylation of N-acetyl-L-glutamate. The chain is Acetylglutamate kinase from Psychrobacter cryohalolentis (strain ATCC BAA-1226 / DSM 17306 / VKM B-2378 / K5).